Reading from the N-terminus, the 288-residue chain is Polyamine aminopropyltransferase (288 aa).

The PABS domain occupies 9–238 (ETLHDQFGQY…GIMTFAWATD (230 aa)). Q33 contacts S-methyl-5'-thioadenosine. Residues H64 and D88 each coordinate spermidine. Residues E108 and 140 to 141 (DG) each bind S-methyl-5'-thioadenosine. D158 acts as the Proton acceptor in catalysis. 158–161 (DCTD) contacts spermidine. S-methyl-5'-thioadenosine is bound at residue P165.

The protein belongs to the spermidine/spermine synthase family. Homodimer or homotetramer.

The protein resides in the cytoplasm. It catalyses the reaction S-adenosyl 3-(methylsulfanyl)propylamine + putrescine = S-methyl-5'-thioadenosine + spermidine + H(+). Its pathway is amine and polyamine biosynthesis; spermidine biosynthesis; spermidine from putrescine: step 1/1. In terms of biological role, catalyzes the irreversible transfer of a propylamine group from the amino donor S-adenosylmethioninamine (decarboxy-AdoMet) to putrescine (1,4-diaminobutane) to yield spermidine. The sequence is that of Polyamine aminopropyltransferase from Shigella flexneri serotype 5b (strain 8401).